The sequence spans 476 residues: Protein THYLAKOID RHODANESE-LIKE, chloroplastic (476 aa).

The transit peptide at 1–21 directs the protein to the chloroplast; the sequence is MAATTTILSSAAPTPLTAPPR. Residues 1–29 form a disordered region; that stretch reads MAATTTILSSAAPTPLTAPPRARARAPAA. Low complexity predominate over residues 11–21; the sequence is AAPTPLTAPPR. A thylakoid-targeting transit peptide spans 22-58; it reads ARARAPAARRRRLRARDILGAALGLANGGASAALAAP. The helical transmembrane segment at 100 to 120 threads the bilayer; that stretch reads LVAAAGVAAVALPLVLAQVLG. The Rhodanese domain maps to 140 to 246; sequence EEPGAQLVDI…WLSSSLPWTA (107 aa). Transmembrane regions (helical) follow at residues 264 to 284 and 287 to 307; these read LPVT…YTEI and VLQF…LIYA. The interval 342 to 476 is disordered; the sequence is LPSTGTKSQP…PPSSPSPSAP (135 aa). Residues 351 to 389 show a composition bias toward low complexity; that stretch reads PAITEAAPATAEAAPAAATATAAPPAAPVEETSTEAAPA. The span at 403–412 shows a compositional bias: pro residues; that stretch reads LKPPSSPSPL. Positions 425 to 446 are enriched in low complexity; the sequence is ESAATESAPAVNSAPVAEAAPE. Positions 447–476 are enriched in pro residues; the sequence is AAPPAAPRPLSPYPNYPDLKPPSSPSPSAP.

In terms of assembly, component of high molecular weight thylakoid LFNRs-containing protein complexes containing LIR1, LFNR1, LFNR2, TIC62 and TROL proteins.

Its subcellular location is the plastid. The protein resides in the chloroplast thylakoid membrane. Its function is as follows. Rhodanese domain-containing protein required for anchoring ferredoxin--NADP reductase to the thylakoid membranes and sustaining efficient linear electron flow (LEF). In Oryza sativa subsp. indica (Rice), this protein is Protein THYLAKOID RHODANESE-LIKE, chloroplastic.